A 308-amino-acid polypeptide reads, in one-letter code: tRNA pseudouridine synthase B (308 aa).

The active-site Nucleophile is Asp44.

It belongs to the pseudouridine synthase TruB family. Type 1 subfamily.

It carries out the reaction uridine(55) in tRNA = pseudouridine(55) in tRNA. Functionally, responsible for synthesis of pseudouridine from uracil-55 in the psi GC loop of transfer RNAs. In Bdellovibrio bacteriovorus (strain ATCC 15356 / DSM 50701 / NCIMB 9529 / HD100), this protein is tRNA pseudouridine synthase B.